The following is a 244-amino-acid chain: 7-cyano-7-deazaguanine synthase (244 aa).

ATP is bound at residue 14–24; the sequence is FSGGQDSATCL. Positions 202, 217, 220, and 223 each coordinate Zn(2+).

This sequence belongs to the QueC family. Zn(2+) is required as a cofactor.

The catalysed reaction is 7-carboxy-7-deazaguanine + NH4(+) + ATP = 7-cyano-7-deazaguanine + ADP + phosphate + H2O + H(+). It participates in purine metabolism; 7-cyano-7-deazaguanine biosynthesis. Functionally, catalyzes the ATP-dependent conversion of 7-carboxy-7-deazaguanine (CDG) to 7-cyano-7-deazaguanine (preQ(0)). This chain is 7-cyano-7-deazaguanine synthase, found in Paraburkholderia phytofirmans (strain DSM 17436 / LMG 22146 / PsJN) (Burkholderia phytofirmans).